The sequence spans 166 residues: uncharacterized protein (166 aa).

Residue Ala2 is modified to N-acetylalanine.

As to quaternary structure, homodimer.

This is an uncharacterized protein from Arabidopsis thaliana (Mouse-ear cress).